A 33-amino-acid chain; its full sequence is LTCLNCPEMFCGKFQICRNGEKICFKKLHQRRP.

2 disulfide bridges follow: cysteine 3–cysteine 24 and cysteine 6–cysteine 11.

As to expression, expressed by the venom gland.

It is found in the secreted. Possible voltage-gated potassium channel (Kv) blocker. Decreases amplitude of compound action potential and conduction velocity in toad sciatic nerve. Has only mild anticoagulant activity even at a concentration of 5ug/ml. Shows no cytotoxicity towards human cell lines. This is Neurotoxin Nk-3FTx from Naja kaouthia (Monocled cobra).